The primary structure comprises 262 residues: UDP-2,3-diacylglucosamine hydrolase (262 aa).

Residues aspartate 10, histidine 12, aspartate 47, asparagine 86, histidine 121, histidine 218, and histidine 220 each contribute to the Mn(2+) site.

It belongs to the LpxH family. Mn(2+) serves as cofactor.

The protein resides in the cell inner membrane. It is found in the cytoplasm. The catalysed reaction is UDP-2-N,3-O-bis[(3R)-3-hydroxytetradecanoyl]-alpha-D-glucosamine + H2O = 2-N,3-O-bis[(3R)-3-hydroxytetradecanoyl]-alpha-D-glucosaminyl 1-phosphate + UMP + 2 H(+). It functions in the pathway glycolipid biosynthesis; lipid IV(A) biosynthesis; lipid IV(A) from (3R)-3-hydroxytetradecanoyl-[acyl-carrier-protein] and UDP-N-acetyl-alpha-D-glucosamine: step 4/6. Its function is as follows. Hydrolyzes the pyrophosphate bond of UDP-2,3-diacylglucosamine to yield 2,3-diacylglucosamine 1-phosphate (lipid X) and UMP by catalyzing the attack of water at the alpha-P atom. Involved in the biosynthesis of lipid A, a phosphorylated glycolipid that anchors the lipopolysaccharide to the outer membrane of the cell. The polypeptide is UDP-2,3-diacylglucosamine hydrolase (Porphyromonas gingivalis (strain ATCC BAA-308 / W83)).